The chain runs to 84 residues: Cell division topological specificity factor (84 aa).

Belongs to the MinE family.

Its function is as follows. Prevents the cell division inhibition by proteins MinC and MinD at internal division sites while permitting inhibition at polar sites. This ensures cell division at the proper site by restricting the formation of a division septum at the midpoint of the long axis of the cell. The polypeptide is Cell division topological specificity factor (Burkholderia ambifaria (strain MC40-6)).